Here is a 129-residue protein sequence, read N- to C-terminus: MHAPQWLGAEGETIAAKYLAAQGYRILDRNYRFHRNEIDIIALDGGVLCFIEVKTRTSIGKGHPAESVTPRKQKEIIRAATGYLAGLDDPWVTCRFDVIAVLAGSLDERSIREYEIEHLKAAFIVADEG.

It belongs to the UPF0102 family.

The polypeptide is UPF0102 protein Cpar_0015 (Chlorobaculum parvum (strain DSM 263 / NCIMB 8327) (Chlorobium vibrioforme subsp. thiosulfatophilum)).